The following is a 2278-amino-acid chain: 1-phosphatidylinositol 3-phosphate 5-kinase FAB1 (2278 aa).

2 disordered regions span residues 1-30 (MSSE…SVNT) and 76-144 (PPTS…LQLP). Ser-2 carries the N-acetylserine modification. The tract at residues 2 to 676 (SSEEPHASIS…NSTKSFQRAQ (675 aa)) is required for localization to the vacuole membrane. 2 stretches are compositionally biased toward low complexity: residues 18-28 (VRSSSTGTSSV) and 76-89 (PPTS…TSTS). Positions 90 to 128 (HVTGTASHSNIKANANTSTSVNKKNLPPTTSGRIPSSTI) are enriched in polar residues. The residue at position 186 (Ser-186) is a Phosphoserine. An FYVE-type zinc finger spans residues 240-299 (DESSKECFSCGKTFNTFRRKHHCRICGQIFCSSCTLLIDGDRFGCHAKMRVCYNCYEHAD). Residues Cys-246, Cys-249, Cys-262, Cys-265, Cys-270, Cys-273, Cys-291, and Cys-294 each contribute to the Zn(2+) site. 5 disordered regions span residues 302 to 337 (EDSS…HSHS), 472 to 500 (ITIN…NNPA), 514 to 534 (NSVN…AQSS), 556 to 697 (FNYN…PNNS), and 727 to 766 (DSSP…NINT). The span at 472 to 498 (ITINNLNNTTSNNSNYNNTNSNSNINN) shows a compositional bias: low complexity. The segment covering 557–570 (NYNSKGPSQQNDTA) has biased composition (polar residues). Over residues 571 to 601 (NGNNDNNNNNNNNNNNNNNNSASGIADNNNI) the composition is skewed to low complexity. Residues 602 to 611 (PSNDNGTTFT) are compositionally biased toward polar residues. The segment covering 634–644 (LNEEDSSEDEG) has biased composition (acidic residues). Polar residues predominate over residues 665 to 679 (MRNSTKSFQRAQASL). Positions 682–692 (MRFRRKSKSKH) are enriched in basic residues. A compositionally biased stretch (polar residues) spans 729-741 (SPLQDKASSSAAS). Positions 749–763 (SNSSGSNNNSNSNSN) are enriched in low complexity. The CCT domain stretch occupies residues 766–1039 (TDPWKRIASI…KIKQVSEFMV (274 aa)). The interval 1181 to 1500 (SSSQNLLGTG…TAKQLKKLFY (320 aa)) is CCR domain. The segment covering 1506 to 1554 (DSEDKKSLHDEKAKTRKPEKNELPLEGLKDVEKPKIDSKNTTENRDRTN) has biased composition (basic and acidic residues). A disordered region spans residues 1506–1627 (DSEDKKSLHD…TRPNIRKMSS (122 aa)). A compositionally biased stretch (polar residues) spans 1555-1564 (EPQNAVTITT). Low complexity predominate over residues 1580–1595 (LTVTPSASSVSSSLTP). Phosphoserine occurs at positions 1627 and 1630. A compositionally biased stretch (polar residues) spans 1766–1776 (SGKTTASTHLN). 2 disordered regions span residues 1766–1804 (SGKT…EPLP) and 1891–1972 (QQQQ…THSQ). A compositionally biased stretch (basic and acidic residues) spans 1780–1799 (VVKETSENPKSIVRESDNSK). Over residues 1918–1932 (DPSVNISPSVSTTSH) the composition is skewed to polar residues. Residues 1932–2266 (HNKGRDSEIS…RFREAMERYI (335 aa)) enclose the PIPK domain. Ser-1938 carries the phosphoserine modification. Thr-1953 bears the Phosphothreonine mark.

As to quaternary structure, component of the PI(3,5)P2 regulatory complex, composed of ATG18, FIG4, FAB1, VAC14 and VAC7. VAC14 nucleates the assembly of the complex and serves as a scaffold. Mg(2+) is required as a cofactor. Requires Mn(2+) as cofactor.

It localises to the vacuole membrane. The protein localises to the endosome membrane. The enzyme catalyses a 1,2-diacyl-sn-glycero-3-phospho-(1D-myo-inositol-3-phosphate) + ATP = a 1,2-diacyl-sn-glycero-3-phospho-(1D-myo-inositol-3,5-bisphosphate) + ADP + H(+). The catalysed reaction is 1,2-dihexadecanoyl-sn-glycero-3-phospho-(1D-myo-inositol-3-phosphate) + ATP = 1,2-dihexadecanoyl-sn-glycero-3-phospho-(1D-myo-inositol-3,5-phosphate) + ADP + H(+). With respect to regulation, activated by VAC14 and VAC7. VAC14 acts as a specific osmotic response regulator. The PI(3,5)P2 regulatory complex regulates both the synthesis and turnover of phosphatidylinositol 3,5-bisphosphate (PtdIns(3,5)P2). Catalyzes the phosphorylation of phosphatidylinositol 3-phosphate on the fifth hydroxyl of the myo-inositol ring, to form phosphatidylinositol 3,5-bisphosphate. Required for endocytic-vacuolar pathway and nuclear migration. The product of the reaction, PI(3,5)P2 is an important regulator of vacuole homeostasis perhaps by controlling membrane flux to and/or from the vacuole. PI(3,5)P2 regulates the transition between trans-SNARE complex formation and vacuole membrane fusion. Hyperosmotic shock-induced increase in the levels of PtdIns(3,5)P2 requires the presence of VAC7, VAC14, and/or FIG4. This is 1-phosphatidylinositol 3-phosphate 5-kinase FAB1 from Saccharomyces cerevisiae (strain ATCC 204508 / S288c) (Baker's yeast).